A 502-amino-acid polypeptide reads, in one-letter code: MEKFQGYLEFDGARQQSFLYPLFFRDYIYVLAYDHGLNRLNRNRPIFLENADYDKKYSSLIVKRLILRMYEQNRLIIPTKDLNKNLGHTNNFYYQMISVLFAVIVEIPFSLRLGSSIEGKNVKKSYNLQSLHSIFPFLEDKLSHFNYVLDVLIPYPIHLEILVQTLRYRVKDASSLHFFRFCLYEYCNWKNFDSKKKSILNPRFLLFLYNSHVCEYESIFFFLRKQSSHLRSTSYDVFFERILFYGKIQHFFKVFVNNFSALLGLLKDPFLHYVRYHGKYILATKDTPLLMNKWKYYFVNLWQCYFSVWFQSQKVNINQLSKDNLEFLGYLSSLRLNPLVVRSQMLENSFLIDNVRIKLDSNIPISSIIGSLAKDKFCNVLGHPISKATWTDSSDSDILNRFVRICRNISHYYSGSSNKKNLYRIKYILRLCCVKTLARKHKSTVRAFLKRLGSGLLEEFLTGEDQVLSLIFPRSDYASKRLYRVRVWYLDILYLNDLVNHE.

It belongs to the intron maturase 2 family. MatK subfamily.

Its subcellular location is the plastid. It localises to the chloroplast. Functionally, usually encoded in the trnK tRNA gene intron. Probably assists in splicing its own and other chloroplast group II introns. This is Maturase K from Brassica campestris (Field mustard).